The primary structure comprises 474 residues: Transcription factor fscB (474 aa).

Disordered regions lie at residues 114–153 and 207–242; these read VDELELSSDTRSSLSPSSHNTTTGHETGLSSVTPPQSYWT and GKEVTKRNKRSRTEAQEASNSPCASSTADSQTNPAP. Positions 120–131 are enriched in low complexity; it reads SSDTRSSLSPSS. A compositionally biased stretch (polar residues) spans 132–153; the sequence is HNTTTGHETGLSSVTPPQSYWT. A compositionally biased stretch (basic and acidic residues) spans 207 to 221; sequence GKEVTKRNKRSRTEA. Residues 222–240 show a composition bias toward polar residues; the sequence is QEASNSPCASSTADSQTNP.

Belongs to the POU transcription factor family. Class-3 subfamily.

The protein localises to the nucleus. Transcription factor; part of the fragmented gene cluster that mediates the biosynthesis of fusarochromene, a tryptophan-derived metabolite closely related to a group of mycotoxins including fusarochromanone. This chain is Transcription factor fscB, found in Fusarium equiseti (Fusarium scirpi).